We begin with the raw amino-acid sequence, 184 residues long: Large ribosomal subunit protein eL14 (184 aa).

The interval 149–184 (KNAKKVDSTPAAKKRIEKARAARKAKPTAAKEKSKK) is disordered. The span at 160 to 174 (AKKRIEKARAARKAK) shows a compositional bias: basic residues.

The protein belongs to the eukaryotic ribosomal protein eL14 family.

The polypeptide is Large ribosomal subunit protein eL14 (Trypanosoma congolense).